A 318-amino-acid chain; its full sequence is ADP-ribosyl cyclase/cyclic ADP-ribose hydrolase 2 (318 aa).

A signal peptide spans 1 to 32 (MAAQGCAASRLLQLLLQLLLLLLLLAAGGARA). Cystine bridges form between Cys-51/Cys-67, Cys-83/Cys-163, and Cys-144/Cys-157. 2 N-linked (GlcNAc...) asparagine glycosylation sites follow: Asn-66 and Asn-95. Position 109 (Trp-109) interacts with NAD(+). Position 109 (Trp-109) interacts with nicotinamide. N-linked (GlcNAc...) asparagine glycosylation is present at Asn-148. Trp-172 contributes to the NAD(+) binding site. Asn-192 carries N-linked (GlcNAc...) asparagine glycosylation. Glu-210 is an NAD(+) binding site. 2 disulfide bridges follow: Cys-238–Cys-259 and Cys-271–Cys-280. Residue Ala-293 is the site of GPI-anchor amidated alanine attachment. Positions 294–318 (PSLYTEQRAGLIIPLFLVLASRTQL) are cleaved as a propeptide — removed in mature form.

It belongs to the ADP-ribosyl cyclase family. As to quaternary structure, homodimer. Expressed in various tissues including placenta, lung, liver and kidney.

The protein resides in the cell membrane. The catalysed reaction is NAD(+) + H2O = ADP-D-ribose + nicotinamide + H(+). The enzyme catalyses NAD(+) = cyclic ADP-beta-D-ribose + nicotinamide + H(+). It carries out the reaction cyclic ADP-beta-D-ribose + H2O = ADP-D-ribose. Its activity is regulated as follows. ADP-ribosyl cyclase and cADPR hydrolase activities are both activated by Zn(2+) or Mn(2+), and inhibited by Cu(2+), while Mg(2+) and Ca(2+) do not have any significant influence. Its function is as follows. Catalyzes both the synthesis of cyclic ADP-beta-D-ribose (cADPR) from NAD(+), and its hydrolysis to ADP-D-ribose (ADPR). Cyclic ADPR is known to serve as an endogenous second messenger that elicits calcium release from intracellular stores, and thus regulates the mobilization of intracellular calcium. May be involved in pre-B-cell growth. This chain is ADP-ribosyl cyclase/cyclic ADP-ribose hydrolase 2 (BST1), found in Homo sapiens (Human).